The primary structure comprises 120 residues: NADH dehydrogenase [ubiquinone] 1 subunit C2 (120 aa).

A helical membrane pass occupies residues 57–76; that stretch reads GLHRQLLFVTSFVFAGYFYL.

Belongs to the complex I NDUFC2 subunit family. Complex I is composed of 45 different subunits. Interacts with TMEM242.

It is found in the mitochondrion inner membrane. In terms of biological role, accessory subunit of the mitochondrial membrane respiratory chain NADH dehydrogenase (Complex I), that is believed not to be involved in catalysis but required for the complex assembly. Complex I functions in the transfer of electrons from NADH to the respiratory chain. The immediate electron acceptor for the enzyme is believed to be ubiquinone. The sequence is that of NADH dehydrogenase [ubiquinone] 1 subunit C2 from Mus musculus (Mouse).